A 470-amino-acid polypeptide reads, in one-letter code: Cannabinoid receptor 1 (470 aa).

Residues methionine 1 to alanine 121 are Extracellular-facing. The required for mitochondrial localization stretch occupies residues lysine 2–leucine 23. Asparagine 78 and asparagine 84 each carry an N-linked (GlcNAc...) asparagine glycan. The helical transmembrane segment at leucine 122–valine 142 threads the bilayer. Topologically, residues glutamine 143–histidine 154 are cytoplasmic. A helical membrane pass occupies residues phenylalanine 155–valine 175. At aspartate 176–asparagine 187 the chain is on the extracellular side. A helical membrane pass occupies residues valine 188 to phenylalanine 208. Over leucine 209–lysine 232 the chain is Cytoplasmic. The helical transmembrane segment at alanine 233–phenylalanine 253 threads the bilayer. Residues glycine 254–methionine 277 are Extracellular-facing. Residues phenylalanine 278–leucine 298 form a helical membrane-spanning segment. Residues tryptophan 299–threonine 344 lie on the Cytoplasmic side of the membrane. A helical membrane pass occupies residues leucine 345 to tyrosine 365. Topologically, residues aspartate 366–threonine 377 are extracellular. Residue asparagine 372 is glycosylated (N-linked (GlcNAc...) asparagine). A helical transmembrane segment spans residues valine 378 to alanine 398. The Cytoplasmic segment spans residues leucine 399–valine 470. The S-palmitoyl cysteine moiety is linked to residue cysteine 415.

The protein belongs to the G-protein coupled receptor 1 family. In terms of processing, palmitoylation at Cys-415 is important for recruitment at both plasma membrane and lipid rafts and association with G protein alpha subunits. In terms of tissue distribution, expressed in neurons, especially in the olfactory bulbs, telencephalic pallium, and hypothalamus and also in the midbrain and hindbrain (in the mesencephalic tegmentum and dorsolateral rhombencephalon). Expressed also in the spinal cord.

It localises to the cell membrane. The protein resides in the mitochondrion outer membrane. Its subcellular location is the cell projection. The protein localises to the axon. It is found in the presynapse. Functionally, G-protein coupled receptor for cannabinoids. Mediates many cannabinoid-induced effects in the central nervous system (CNS), as well as in peripheral tissues. Regulates cellular respiration and energy production in response to cannabinoids. Signaling typically involves reduction in cyclic AMP. This Xenopus laevis (African clawed frog) protein is Cannabinoid receptor 1 (cnr1).